The primary structure comprises 359 residues: Chorismate synthase (359 aa).

NADP(+)-binding residues include R48 and R54. FMN-binding positions include R129–S131, N241–A242, G285, K300–S304, and R326.

Belongs to the chorismate synthase family. As to quaternary structure, homotetramer. FMNH2 is required as a cofactor.

The enzyme catalyses 5-O-(1-carboxyvinyl)-3-phosphoshikimate = chorismate + phosphate. Its pathway is metabolic intermediate biosynthesis; chorismate biosynthesis; chorismate from D-erythrose 4-phosphate and phosphoenolpyruvate: step 7/7. Functionally, catalyzes the anti-1,4-elimination of the C-3 phosphate and the C-6 proR hydrogen from 5-enolpyruvylshikimate-3-phosphate (EPSP) to yield chorismate, which is the branch point compound that serves as the starting substrate for the three terminal pathways of aromatic amino acid biosynthesis. This reaction introduces a second double bond into the aromatic ring system. This is Chorismate synthase from Afipia carboxidovorans (strain ATCC 49405 / DSM 1227 / KCTC 32145 / OM5) (Oligotropha carboxidovorans).